The sequence spans 100 residues: MSWIDKFFITFFYTKVGEDEFLNQYYESRNNIDYLGRSRRCVIYKNINESTKIPPSWYSWLHHLVNEIPKNVQLFPWQQNNKITKKLPKTSNLKYNRWQP.

This is an uncharacterized protein from Rickettsia prowazekii (strain Madrid E).